Reading from the N-terminus, the 301-residue chain is Diaminopimelate epimerase (301 aa).

Residues asparagine 15, glutamine 47, and asparagine 67 each contribute to the substrate site. Catalysis depends on cysteine 76, which acts as the Proton donor. Residues 77-78, asparagine 163, asparagine 197, and 215-216 contribute to the substrate site; these read GN and ER. Cysteine 224 functions as the Proton acceptor in the catalytic mechanism. 225 to 226 contacts substrate; it reads GS.

It belongs to the diaminopimelate epimerase family. As to quaternary structure, homodimer.

The protein resides in the cytoplasm. It carries out the reaction (2S,6S)-2,6-diaminopimelate = meso-2,6-diaminopimelate. The protein operates within amino-acid biosynthesis; L-lysine biosynthesis via DAP pathway; DL-2,6-diaminopimelate from LL-2,6-diaminopimelate: step 1/1. Catalyzes the stereoinversion of LL-2,6-diaminopimelate (L,L-DAP) to meso-diaminopimelate (meso-DAP), a precursor of L-lysine and an essential component of the bacterial peptidoglycan. In Rhizobium rhizogenes (strain K84 / ATCC BAA-868) (Agrobacterium radiobacter), this protein is Diaminopimelate epimerase.